The following is a 284-amino-acid chain: RNase adapter protein RapZ (284 aa).

8-15 (GRSGSGKS) contacts ATP. 56–59 (DVRN) serves as a coordination point for GTP. Residues 266 to 284 (RSRGKNVQSRHRTLEKRKT) form an RNA-binding region.

Belongs to the RapZ-like family. RapZ subfamily. Homotrimer.

In terms of biological role, modulates the synthesis of GlmS, by affecting the processing and stability of the regulatory small RNA GlmZ. When glucosamine-6-phosphate (GlcN6P) concentrations are high in the cell, RapZ binds GlmZ and targets it to cleavage by RNase E. Consequently, GlmZ is inactivated and unable to activate GlmS synthesis. Under low GlcN6P concentrations, RapZ is sequestered and inactivated by an other regulatory small RNA, GlmY, preventing GlmZ degradation and leading to synthesis of GlmS. The polypeptide is RNase adapter protein RapZ (Citrobacter koseri (strain ATCC BAA-895 / CDC 4225-83 / SGSC4696)).